A 328-amino-acid chain; its full sequence is Tryptophan--tRNA ligase (328 aa).

ATP-binding positions include 9–11 (QPS) and 17–18 (GN). Positions 10–18 (PSGVITIGN) match the 'HIGH' region motif. Aspartate 132 contributes to the L-tryptophan binding site. Residues 144-146 (GED), isoleucine 183, and 192-196 (KMSKS) each bind ATP. A 'KMSKS' region motif is present at residues 192–196 (KMSKS).

This sequence belongs to the class-I aminoacyl-tRNA synthetase family. In terms of assembly, homodimer.

Its subcellular location is the cytoplasm. The enzyme catalyses tRNA(Trp) + L-tryptophan + ATP = L-tryptophyl-tRNA(Trp) + AMP + diphosphate + H(+). With respect to regulation, inhibited by indolmycin, a competitive inhibitor for tryptophan. Catalyzes the attachment of tryptophan to tRNA(Trp). This is Tryptophan--tRNA ligase from Geobacillus stearothermophilus (Bacillus stearothermophilus).